We begin with the raw amino-acid sequence, 398 residues long: 1-deoxy-D-xylulose 5-phosphate reductoisomerase (398 aa).

Residues threonine 10, glycine 11, serine 12, isoleucine 13, glycine 36, asparagine 38, and asparagine 124 each contribute to the NADPH site. Lysine 125 contributes to the 1-deoxy-D-xylulose 5-phosphate binding site. Glutamate 126 lines the NADPH pocket. Position 150 (aspartate 150) interacts with Mn(2+). 1-deoxy-D-xylulose 5-phosphate contacts are provided by serine 151, glutamate 152, serine 176, and histidine 199. Residue glutamate 152 participates in Mn(2+) binding. Residue glycine 205 participates in NADPH binding. Positions 212, 217, 218, and 221 each coordinate 1-deoxy-D-xylulose 5-phosphate. Glutamate 221 provides a ligand contact to Mn(2+).

Belongs to the DXR family. Mg(2+) serves as cofactor. It depends on Mn(2+) as a cofactor.

The catalysed reaction is 2-C-methyl-D-erythritol 4-phosphate + NADP(+) = 1-deoxy-D-xylulose 5-phosphate + NADPH + H(+). The protein operates within isoprenoid biosynthesis; isopentenyl diphosphate biosynthesis via DXP pathway; isopentenyl diphosphate from 1-deoxy-D-xylulose 5-phosphate: step 1/6. Its function is as follows. Catalyzes the NADPH-dependent rearrangement and reduction of 1-deoxy-D-xylulose-5-phosphate (DXP) to 2-C-methyl-D-erythritol 4-phosphate (MEP). This Nostoc punctiforme (strain ATCC 29133 / PCC 73102) protein is 1-deoxy-D-xylulose 5-phosphate reductoisomerase.